The following is a 413-amino-acid chain: Arginine biosynthesis bifunctional protein ArgJ (413 aa).

Residues Thr-160, Lys-186, Thr-197, Glu-284, Asn-408, and Ser-413 each contribute to the substrate site. Thr-197 serves as the catalytic Nucleophile.

The protein belongs to the ArgJ family. Heterotetramer of two alpha and two beta chains.

The protein localises to the cytoplasm. It catalyses the reaction N(2)-acetyl-L-ornithine + L-glutamate = N-acetyl-L-glutamate + L-ornithine. The enzyme catalyses L-glutamate + acetyl-CoA = N-acetyl-L-glutamate + CoA + H(+). It functions in the pathway amino-acid biosynthesis; L-arginine biosynthesis; L-ornithine and N-acetyl-L-glutamate from L-glutamate and N(2)-acetyl-L-ornithine (cyclic): step 1/1. It participates in amino-acid biosynthesis; L-arginine biosynthesis; N(2)-acetyl-L-ornithine from L-glutamate: step 1/4. In terms of biological role, catalyzes two activities which are involved in the cyclic version of arginine biosynthesis: the synthesis of N-acetylglutamate from glutamate and acetyl-CoA as the acetyl donor, and of ornithine by transacetylation between N(2)-acetylornithine and glutamate. The protein is Arginine biosynthesis bifunctional protein ArgJ of Burkholderia pseudomallei (strain K96243).